A 328-amino-acid chain; its full sequence is Beta-ketoacyl-[acyl-carrier-protein] synthase III 2 (328 aa).

Residues Cys113 and His255 contribute to the active site. Residues 256–260 form an ACP-binding region; it reads QANAR. Asn285 is an active-site residue.

Belongs to the thiolase-like superfamily. FabH family. As to quaternary structure, homodimer.

The protein resides in the cytoplasm. It catalyses the reaction malonyl-[ACP] + acetyl-CoA + H(+) = 3-oxobutanoyl-[ACP] + CO2 + CoA. It participates in lipid metabolism; fatty acid biosynthesis. In terms of biological role, catalyzes the condensation reaction of fatty acid synthesis by the addition to an acyl acceptor of two carbons from malonyl-ACP. Catalyzes the first condensation reaction which initiates fatty acid synthesis and may therefore play a role in governing the total rate of fatty acid production. Possesses both acetoacetyl-ACP synthase and acetyl transacylase activities. Its substrate specificity determines the biosynthesis of branched-chain and/or straight-chain of fatty acids. In Lactiplantibacillus plantarum (strain ATCC BAA-793 / NCIMB 8826 / WCFS1) (Lactobacillus plantarum), this protein is Beta-ketoacyl-[acyl-carrier-protein] synthase III 2.